The primary structure comprises 413 residues: Arginine biosynthesis bifunctional protein ArgJ (413 aa).

6 residues coordinate substrate: threonine 158, lysine 184, threonine 195, glutamate 285, asparagine 408, and serine 413. Residue threonine 195 is the Nucleophile of the active site.

This sequence belongs to the ArgJ family. Heterotetramer of two alpha and two beta chains.

The protein localises to the cytoplasm. The enzyme catalyses N(2)-acetyl-L-ornithine + L-glutamate = N-acetyl-L-glutamate + L-ornithine. It carries out the reaction L-glutamate + acetyl-CoA = N-acetyl-L-glutamate + CoA + H(+). It functions in the pathway amino-acid biosynthesis; L-arginine biosynthesis; L-ornithine and N-acetyl-L-glutamate from L-glutamate and N(2)-acetyl-L-ornithine (cyclic): step 1/1. The protein operates within amino-acid biosynthesis; L-arginine biosynthesis; N(2)-acetyl-L-ornithine from L-glutamate: step 1/4. Its function is as follows. Catalyzes two activities which are involved in the cyclic version of arginine biosynthesis: the synthesis of N-acetylglutamate from glutamate and acetyl-CoA as the acetyl donor, and of ornithine by transacetylation between N(2)-acetylornithine and glutamate. In Brucella melitensis biotype 1 (strain ATCC 23456 / CCUG 17765 / NCTC 10094 / 16M), this protein is Arginine biosynthesis bifunctional protein ArgJ.